A 379-amino-acid polypeptide reads, in one-letter code: Protein RecA (379 aa).

The segment at M1–E24 is disordered. Residues S7–L16 show a composition bias toward polar residues. G84–T91 serves as a coordination point for ATP.

Belongs to the RecA family.

It is found in the cytoplasm. In terms of biological role, can catalyze the hydrolysis of ATP in the presence of single-stranded DNA, the ATP-dependent uptake of single-stranded DNA by duplex DNA, and the ATP-dependent hybridization of homologous single-stranded DNAs. It interacts with LexA causing its activation and leading to its autocatalytic cleavage. In Prochlorococcus marinus (strain MIT 9303), this protein is Protein RecA.